Consider the following 258-residue polypeptide: Spindlin-3 (258 aa).

The interval 1-23 (MKTPFGKAAAGQRSRTGAGHGSV) is disordered. Tudor-like domain regions lie at residues 50–99 (VGCR…LELH), 129–178 (VGKA…YQLL), and 210–255 (VGKQ…YDLV). Histone H3K4me3 and H3R8me2a binding regions lie at residues E138 and 246–248 (DFH).

It belongs to the SPIN/STSY family. Interacts with C11orf84/SPINDOC.

Its function is as follows. Exhibits H3K4me3-binding activity. This chain is Spindlin-3 (SPIN3), found in Homo sapiens (Human).